A 597-amino-acid chain; its full sequence is DNA ligase (597 aa).

Residue glutamate 262 coordinates ATP. Lysine 264 (N6-AMP-lysine intermediate) is an active-site residue. Arginine 269, arginine 284, glutamate 314, phenylalanine 354, arginine 431, and lysine 437 together coordinate ATP.

The protein belongs to the ATP-dependent DNA ligase family. The cofactor is Mg(2+). It depends on Mn(2+) as a cofactor.

It catalyses the reaction ATP + (deoxyribonucleotide)n-3'-hydroxyl + 5'-phospho-(deoxyribonucleotide)m = (deoxyribonucleotide)n+m + AMP + diphosphate.. The catalysed reaction is ADP + (deoxyribonucleotide)n-3'-hydroxyl + 5'-phospho-(deoxyribonucleotide)m = (deoxyribonucleotide)n+m + AMP + phosphate.. It carries out the reaction GTP + (deoxyribonucleotide)n-3'-hydroxyl + 5'-phospho-(deoxyribonucleotide)m = (deoxyribonucleotide)n+m + GMP + diphosphate.. Inhibited by Ca(2+) and Zn(2+). Functionally, DNA ligase that seals nicks in double-stranded DNA during DNA replication, DNA recombination and DNA repair. Can use both ATP and ADP. This Staphylothermus marinus (strain ATCC 43588 / DSM 3639 / JCM 9404 / F1) protein is DNA ligase.